A 564-amino-acid polypeptide reads, in one-letter code: Proline--tRNA ligase (564 aa).

This sequence belongs to the class-II aminoacyl-tRNA synthetase family. ProS type 1 subfamily. As to quaternary structure, homodimer.

The protein localises to the cytoplasm. The catalysed reaction is tRNA(Pro) + L-proline + ATP = L-prolyl-tRNA(Pro) + AMP + diphosphate. Its function is as follows. Catalyzes the attachment of proline to tRNA(Pro) in a two-step reaction: proline is first activated by ATP to form Pro-AMP and then transferred to the acceptor end of tRNA(Pro). As ProRS can inadvertently accommodate and process non-cognate amino acids such as alanine and cysteine, to avoid such errors it has two additional distinct editing activities against alanine. One activity is designated as 'pretransfer' editing and involves the tRNA(Pro)-independent hydrolysis of activated Ala-AMP. The other activity is designated 'posttransfer' editing and involves deacylation of mischarged Ala-tRNA(Pro). The misacylated Cys-tRNA(Pro) is not edited by ProRS. This chain is Proline--tRNA ligase, found in Xanthomonas campestris pv. campestris (strain 8004).